The following is a 187-amino-acid chain: Phosphatidylethanolamine-binding protein 1 (187 aa).

Serine 6 and serine 13 each carry phosphoserine. Threonine 42 is subject to Phosphothreonine. 2 positions are modified to phosphoserine: serine 52 and serine 98. Residues 93 to 134 are interaction with RAF1; that stretch reads KGGNISSGTVLSDYVGSGPPKGTGLHRYVWLVYEQDGPLKCD.

This sequence belongs to the phosphatidylethanolamine-binding protein family. Has a tendency to form dimers by disulfide cross-linking. Interacts with RAF1 and this interaction is enhanced if RAF1 is phosphorylated on residues 'Ser-338', 'Ser-339', 'Tyr-340' and 'Tyr-341'. Interacts with ALOX15; in response to IL13/interleukin-13, prevents the interaction of PEBP1 with RAF1 to activate the ERK signaling cascade.

The protein localises to the cytoplasm. Functionally, binds ATP, opioids and phosphatidylethanolamine. Has lower affinity for phosphatidylinositol and phosphatidylcholine. Serine protease inhibitor which inhibits thrombin, neuropsin and chymotrypsin but not trypsin, tissue type plasminogen activator and elastase. Inhibits the kinase activity of RAF1 by inhibiting its activation and by dissociating the RAF1/MEK complex and acting as a competitive inhibitor of MEK phosphorylation. Its function is as follows. HCNP may be involved in the function of the presynaptic cholinergic neurons of the central nervous system. HCNP increases the production of choline acetyltransferase but not acetylcholinesterase. Seems to be mediated by a specific receptor. The protein is Phosphatidylethanolamine-binding protein 1 (PEBP1) of Oryctolagus cuniculus (Rabbit).